We begin with the raw amino-acid sequence, 102 residues long: Small ribosomal subunit protein uS10 (102 aa).

This sequence belongs to the universal ribosomal protein uS10 family. Part of the 30S ribosomal subunit.

Functionally, involved in the binding of tRNA to the ribosomes. The sequence is that of Small ribosomal subunit protein uS10 from Streptococcus thermophilus (strain ATCC BAA-250 / LMG 18311).